A 238-amino-acid polypeptide reads, in one-letter code: Large ribosomal subunit protein bL25 (238 aa).

The segment covering 1–10 (MATTVKELKA) has biased composition (basic and acidic residues). The interval 1–24 (MATTVKELKATARPKSGKGAARAE) is disordered.

Belongs to the bacterial ribosomal protein bL25 family. CTC subfamily. In terms of assembly, part of the 50S ribosomal subunit; part of the 5S rRNA/L5/L18/L25 subcomplex. Contacts the 5S rRNA. Binds to the 5S rRNA independently of L5 and L18.

Functionally, this is one of the proteins that binds to the 5S RNA in the ribosome where it forms part of the central protuberance. In Bradyrhizobium diazoefficiens (strain JCM 10833 / BCRC 13528 / IAM 13628 / NBRC 14792 / USDA 110), this protein is Large ribosomal subunit protein bL25.